Consider the following 259-residue polypeptide: 5'-nucleotidase SurE (259 aa).

The a divalent metal cation site is built by D8, D9, S40, and N92.

Belongs to the SurE nucleotidase family. Requires a divalent metal cation as cofactor.

It is found in the cytoplasm. The enzyme catalyses a ribonucleoside 5'-phosphate + H2O = a ribonucleoside + phosphate. Functionally, nucleotidase that shows phosphatase activity on nucleoside 5'-monophosphates. The polypeptide is 5'-nucleotidase SurE (Xanthomonas axonopodis pv. citri (strain 306)).